The chain runs to 316 residues: Homoserine kinase (316 aa).

97–107 (PPARGLGSSAS) contributes to the ATP binding site.

It belongs to the GHMP kinase family. Homoserine kinase subfamily.

It is found in the cytoplasm. It carries out the reaction L-homoserine + ATP = O-phospho-L-homoserine + ADP + H(+). Its pathway is amino-acid biosynthesis; L-threonine biosynthesis; L-threonine from L-aspartate: step 4/5. Functionally, catalyzes the ATP-dependent phosphorylation of L-homoserine to L-homoserine phosphate. This chain is Homoserine kinase, found in Prochlorococcus marinus (strain MIT 9303).